Reading from the N-terminus, the 702-residue chain is Kinesin-like protein KIF3A (702 aa).

Positions 14–345 (NVKVVVRCRP…LRYANRAKNI (332 aa)) constitute a Kinesin motor domain. 100–107 (GQTGTGKT) is an ATP binding site. Residues 355–593 (PKDALLRQFQ…LSRELRLQML (239 aa)) are a coiled coil. 2 disordered regions span residues 372-424 (KKLE…KMIE) and 667-702 (LMKLERPRTSKGKARPKTGRRKRSAKPETVIDSLLQ). The span at 376–400 (EGEEISGSDISGSEEDDDEEGEIGE) shows a compositional bias: acidic residues. Positions 410 to 424 (DQAGKKKVSPDKMIE) are enriched in basic and acidic residues. Residues 600-702 (PRDYQEMIEN…PETVIDSLLQ (103 aa)) are globular. Residues 675-690 (TSKGKARPKTGRRKRS) are compositionally biased toward basic residues. The residue at position 690 (Ser690) is a Phosphoserine.

Belongs to the TRAFAC class myosin-kinesin ATPase superfamily. Kinesin family. Kinesin II subfamily. Heterodimer of KIF3A and KIF3B. Interacts with CIMAP3. Interacts with CLN3. Interacts with DCTN1. Interacts with FLCN. Interacts with AP3B1.

Its subcellular location is the cytoplasm. The protein resides in the cytoskeleton. It localises to the cell projection. The protein localises to the cilium. It is found in the microtubule organizing center. Its subcellular location is the centrosome. The protein resides in the centriole. Its function is as follows. Microtubule-based anterograde translocator for membranous organelles. Plus end-directed microtubule sliding activity in vitro. Plays a role in primary cilia formation. Plays a role in centriole cohesion and subdistal appendage organization and function. Regulates the formation of the subdistal appendage via recruitment of DCTN1 to the centriole. Also required for ciliary basal feet formation and microtubule anchoring to mother centriole. This chain is Kinesin-like protein KIF3A (KIF3A), found in Pongo abelii (Sumatran orangutan).